A 237-amino-acid chain; its full sequence is Class B acid phosphatase (237 aa).

The first 23 residues, 1–23, serve as a signal peptide directing secretion; sequence MRKTPLALSAVFLLLSLNQSAFA. Aspartate 69 acts as the Nucleophile in catalysis. Positions 69 and 71 each coordinate Mg(2+). Aspartate 71 serves as the catalytic Proton donor. Residues 137–138 and lysine 177 contribute to the substrate site; that span reads TG. Residue aspartate 192 coordinates Mg(2+).

It belongs to the class B bacterial acid phosphatase family. As to quaternary structure, homotetramer. It depends on Mg(2+) as a cofactor.

Its subcellular location is the periplasm. It carries out the reaction a phosphate monoester + H2O = an alcohol + phosphate. In terms of biological role, dephosphorylates several organic phosphate monoesters. Also has a phosphotransferase activity catalyzing the transfer of low-energy phosphate groups from organic phosphate monoesters to free hydroxyl groups of various organic compounds. The polypeptide is Class B acid phosphatase (Rahnella sp. (strain Y9602)).